The primary structure comprises 513 residues: MSWPLIGAYALLAFVAIIALNVTYQFLFRLLNKTRPPLVFHWIPFIGSTIHYGMDPYGFFFSCREKYGDIFTFILLGRPTTVYLGTQGNEFILNGKLKDVNAEEVYSPLTTPVFGSDVVYDCPNSKLIEQKKFIKFGLSQTALEAHVPLIEKEVEDYLAMSPNFHGTSGEVDITAAMAEITIFTAGSALQGEEVRSKLTTEFAVLYHDLDKGFTPINFMLPWAPLPHNKKRDAAHARMRAIYIDIINKRRNAGDNVPEKLDMIGNLMQCTYKNGQPLPDKEIAHIMITLLMAGQHSSSSISSWIMLRLASQPAVVEELYQEQLANLERTGPNNSLAPLQYKDFDNLPLHQNVIRETLRLNSSIHSLMRKVKNPLPVPGTPYVIPTSHVLLSAPGVTALSDEYFPNAMAWDPHRWETQAPKENDKDDIVDYGYGAISKGTSSPYLPFGAGRHRCIGEKFAYLNLAVIVATMVRHLRFSNLDGQTGVPATDYSSLFSGPMKPARIRWERRAAKSG.

Residues 3–23 traverse the membrane as a helical segment; that stretch reads WPLIGAYALLAFVAIIALNVT. Cys-453 contributes to the heme binding site.

The protein belongs to the cytochrome P450 family. Heme serves as cofactor.

It localises to the membrane. The enzyme catalyses a 14alpha-methyl steroid + 3 reduced [NADPH--hemoprotein reductase] + 3 O2 = a Delta(14) steroid + formate + 3 oxidized [NADPH--hemoprotein reductase] + 4 H2O + 4 H(+). The catalysed reaction is a 14alpha-methyl steroid + reduced [NADPH--hemoprotein reductase] + O2 = a 14alpha-hydroxymethyl steroid + oxidized [NADPH--hemoprotein reductase] + H2O + H(+). It catalyses the reaction a 14alpha-hydroxymethyl steroid + reduced [NADPH--hemoprotein reductase] + O2 = a 14alpha-formyl steroid + oxidized [NADPH--hemoprotein reductase] + 2 H2O + H(+). It carries out the reaction a 14alpha-formyl steroid + reduced [NADPH--hemoprotein reductase] + O2 = a Delta(14) steroid + formate + oxidized [NADPH--hemoprotein reductase] + H2O + 2 H(+). The enzyme catalyses lanosterol + 3 reduced [NADPH--hemoprotein reductase] + 3 O2 = 4,4-dimethyl-5alpha-cholesta-8,14,24-trien-3beta-ol + formate + 3 oxidized [NADPH--hemoprotein reductase] + 4 H2O + 4 H(+). The catalysed reaction is lanosterol + reduced [NADPH--hemoprotein reductase] + O2 = 32-hydroxylanosterol + oxidized [NADPH--hemoprotein reductase] + H2O + H(+). It catalyses the reaction 32-hydroxylanosterol + reduced [NADPH--hemoprotein reductase] + O2 = 32-oxolanosterol + oxidized [NADPH--hemoprotein reductase] + 2 H2O + H(+). It carries out the reaction 32-oxolanosterol + reduced [NADPH--hemoprotein reductase] + O2 = 4,4-dimethyl-5alpha-cholesta-8,14,24-trien-3beta-ol + formate + oxidized [NADPH--hemoprotein reductase] + H2O + 2 H(+). The enzyme catalyses eburicol + 3 reduced [NADPH--hemoprotein reductase] + 3 O2 = 14-demethyleburicol + formate + 3 oxidized [NADPH--hemoprotein reductase] + 4 H2O + 4 H(+). The catalysed reaction is eburicol + reduced [NADPH--hemoprotein reductase] + O2 = 32-hydroxyeburicol + oxidized [NADPH--hemoprotein reductase] + H2O + H(+). It catalyses the reaction 32-hydroxyeburicol + reduced [NADPH--hemoprotein reductase] + O2 = 32-oxoeburicol + oxidized [NADPH--hemoprotein reductase] + 2 H2O + H(+). It carries out the reaction 32-oxoeburicol + reduced [NADPH--hemoprotein reductase] + O2 = 14-demethyleburicol + formate + oxidized [NADPH--hemoprotein reductase] + H2O + 2 H(+). It participates in steroid biosynthesis; sterol biosynthesis. Sterol 14-alpha demethylase; part of the gene cluster that mediates the biosynthesis of the tetrahydropyranyl antifungal agent restricticin that acts as an inhibitor of CYP51 and blocks the ergosterol biosynthesis. Sterol 14-alpha-demethylase plays a critical role in the biosynthesis of ergosterol, the major sterol component in fungal membranes that participates in a variety of functions. Rtsn2 acts as a self-resistant CYP51 that contains mutations found in CYP51s isolated from azole resistance strains and that is not inhibited by the final product of the cluster, restricticin. The sequence is that of Sterol 14-alpha demethylase rstn2 from Aspergillus nomiae NRRL (strain ATCC 15546 / NRRL 13137 / CBS 260.88 / M93).